The chain runs to 387 residues: Sulfoacetaldehyde reductase (387 aa).

Belongs to the iron-containing alcohol dehydrogenase family.

The catalysed reaction is 2-hydroxyethane-1-sulfonate + NAD(+) = sulfoacetaldehyde + NADH + H(+). It functions in the pathway organosulfur degradation; alkanesulfonate degradation. Involved in an anaerobic respiration pathway that converts the sulfonate taurine (2-aminoethanesulfonate) to ammonia, acetate and sulfide. Catalyzes the NADH-dependent reduction of sulfoacetaldehyde to 2-hydroxyethane-1-sulfonate (isethionate). Does not accept acetaldehyde as a substrate. The sequence is that of Sulfoacetaldehyde reductase from Bilophila wadsworthia (strain 3_1_6).